A 199-amino-acid polypeptide reads, in one-letter code: Putative AgrB-like protein (199 aa).

The next 5 membrane-spanning stretches (helical) occupy residues 43–63 (IIIF…FSFI), 81–101 (YGCL…TRLF), 108–128 (FYIV…PCPN), 139–159 (LKIL…LSPL), and 165–185 (ILIS…KGVI).

The protein belongs to the AgrB family.

Its subcellular location is the cell membrane. May be involved in the proteolytic processing of a quorum sensing system signal molecule precursor. This chain is Putative AgrB-like protein (cfg02), found in Clostridium beijerinckii (Clostridium MP).